The sequence spans 569 residues: 2-succinyl-5-enolpyruvyl-6-hydroxy-3-cyclohexene-1-carboxylate synthase (569 aa).

Belongs to the TPP enzyme family. MenD subfamily. In terms of assembly, homodimer. Mg(2+) serves as cofactor. The cofactor is Mn(2+). Thiamine diphosphate is required as a cofactor.

The catalysed reaction is isochorismate + 2-oxoglutarate + H(+) = 5-enolpyruvoyl-6-hydroxy-2-succinyl-cyclohex-3-ene-1-carboxylate + CO2. The protein operates within quinol/quinone metabolism; 1,4-dihydroxy-2-naphthoate biosynthesis; 1,4-dihydroxy-2-naphthoate from chorismate: step 2/7. It functions in the pathway quinol/quinone metabolism; menaquinone biosynthesis. Catalyzes the thiamine diphosphate-dependent decarboxylation of 2-oxoglutarate and the subsequent addition of the resulting succinic semialdehyde-thiamine pyrophosphate anion to isochorismate to yield 2-succinyl-5-enolpyruvyl-6-hydroxy-3-cyclohexene-1-carboxylate (SEPHCHC). This chain is 2-succinyl-5-enolpyruvyl-6-hydroxy-3-cyclohexene-1-carboxylate synthase, found in Paenarthrobacter aurescens (strain TC1).